Reading from the N-terminus, the 42-residue chain is TYCAEIAHNVSTKKRKEIVERAAQLDIVVPTKLARAPSQEDE.

The protein belongs to the eukaryotic ribosomal protein eL32 family.

In Zea mays (Maize), this protein is Large ribosomal subunit protein eL32 (RPL32).